The sequence spans 161 residues: Cyclic pyranopterin monophosphate synthase (161 aa).

Substrate is bound by residues 73–75 (LCH) and 110–111 (ME). D125 is an active-site residue.

Belongs to the MoaC family. As to quaternary structure, homohexamer; trimer of dimers.

The enzyme catalyses (8S)-3',8-cyclo-7,8-dihydroguanosine 5'-triphosphate = cyclic pyranopterin phosphate + diphosphate. The protein operates within cofactor biosynthesis; molybdopterin biosynthesis. Its function is as follows. Catalyzes the conversion of (8S)-3',8-cyclo-7,8-dihydroguanosine 5'-triphosphate to cyclic pyranopterin monophosphate (cPMP). The chain is Cyclic pyranopterin monophosphate synthase from Pseudomonas syringae pv. syringae (strain B728a).